A 206-amino-acid chain; its full sequence is Imidazoleglycerol-phosphate dehydratase (206 aa).

This sequence belongs to the imidazoleglycerol-phosphate dehydratase family.

It is found in the cytoplasm. The enzyme catalyses D-erythro-1-(imidazol-4-yl)glycerol 3-phosphate = 3-(imidazol-4-yl)-2-oxopropyl phosphate + H2O. It participates in amino-acid biosynthesis; L-histidine biosynthesis; L-histidine from 5-phospho-alpha-D-ribose 1-diphosphate: step 6/9. This chain is Imidazoleglycerol-phosphate dehydratase, found in Cutibacterium acnes (strain DSM 16379 / KPA171202) (Propionibacterium acnes).